A 339-amino-acid polypeptide reads, in one-letter code: ATP-dependent 6-phosphofructokinase (339 aa).

Residues Gly-11, 72-73, and 102-105 each bind ATP; these read RY and GDGS. Asp-103 contributes to the Mg(2+) binding site. Residues 125-127, Arg-162, and 169-171 contribute to the substrate site; these read TID and MGR. Asp-127 (proton acceptor) is an active-site residue. Residues 185–187 and 214–216 contribute to the ADP site; these read GAD and KSH. Substrate contacts are provided by residues Glu-223, Arg-245, and 251 to 254; that span reads HVIR.

This sequence belongs to the phosphofructokinase type A (PFKA) family. ATP-dependent PFK group I subfamily. Prokaryotic clade 'B1' sub-subfamily. As to quaternary structure, homotetramer. It depends on Mg(2+) as a cofactor.

It is found in the cytoplasm. It catalyses the reaction beta-D-fructose 6-phosphate + ATP = beta-D-fructose 1,6-bisphosphate + ADP + H(+). It functions in the pathway carbohydrate degradation; glycolysis; D-glyceraldehyde 3-phosphate and glycerone phosphate from D-glucose: step 3/4. With respect to regulation, allosterically activated by ADP and other diphosphonucleosides, and allosterically inhibited by phosphoenolpyruvate. Its function is as follows. Catalyzes the phosphorylation of D-fructose 6-phosphate to fructose 1,6-bisphosphate by ATP, the first committing step of glycolysis. The chain is ATP-dependent 6-phosphofructokinase from Streptococcus thermophilus (strain ATCC BAA-491 / LMD-9).